An 870-amino-acid polypeptide reads, in one-letter code: Probable disease resistance protein At1g59620 (870 aa).

The NB-ARC domain occupies 123–432 (DKRNMRQTFS…AAEGMPRPRY (310 aa)). Residue 167–174 (GMGGIGKT) coordinates ATP. 6 LRR repeats span residues 543–567 (LQLM…IGLL), 568–590 (IHLR…MQNL), 703–726 (MSGI…IYMP), 735–758 (PWHL…ILEK), 759–786 (LLQL…GFPQ), and 808–833 (MPRL…KFIT).

It belongs to the disease resistance NB-LRR family.

In terms of biological role, probable disease resistance protein. This Arabidopsis thaliana (Mouse-ear cress) protein is Probable disease resistance protein At1g59620.